The sequence spans 679 residues: G-protein-signaling modulator 2 (679 aa).

An important for interaction with NUMA1; INSC and FRMPD1 region spans residues 22–357 (ASCLELALEG…HLEISREVGD (336 aa)). TPR repeat units follow at residues 24 to 57 (CLEL…GTED), 62 to 95 (SAIY…ARTI), 102 to 135 (AKAS…SREL), 142 to 184 (ARAL…AVDL), 202 to 235 (GRAF…AKEF), 242 to 275 (RRAY…ARQL), 282 to 315 (AQSC…AQEL), and 322 to 355 (GRAC…SREV). Residues Ser-408 and Ser-484 each carry the phosphoserine modification. Phosphothreonine is present on Thr-487. The region spanning 490 to 512 (DEGFFDLLRRFQSNRMDDQRCHL) is the GoLoco 1 domain. 2 positions are modified to phosphoserine: Ser-540 and Ser-564. GoLoco domains follow at residues 543–565 (TDEF…RASF), 594–616 (DEDF…RCAP), and 628–650 (DEDF…RVLL). Residues Arg-608, Arg-613, Arg-642, and Arg-647 each contribute to the GDP site.

The protein belongs to the GPSM family. As to quaternary structure, interacts with the dynein-dynactin complex; this interaction is inhibited in a PLK1-dependent manner. Part of a spindle orientation complex at least composed of GNAI1, GPSM2 and NUMA1. Interacts with LLGL2. Interacts (via TPR repeat region) with INSC/inscuteable. Interacts (via TPR repeat region) with NUMA1 (via C-terminus); this interaction is direct, inhibited in a PLK1-dependent manner and promotes spindle pole organization. INSC and NUMA1 compete for the same binding site, but INSC has higher affinity and can displace NUMA1 (in vitro). Interacts with GNAI2. Interacts (via GoLoco domains) with the GDP-bound form of GNAI1 and GNAI3; has much lower affinity for the GTP-bound form. Interaction with GDP-bound GNAI3 strongly enhances the affinity for NUMA1. Interacts (via TPR repeat region) with FRMPD1. INSC and FRMPD1 compete for the same binding site, but INSC has higher affinity and can displace FRMPD1 (in vitro). Interacts (via TPR repeat region) with FRMPD4. Identified in a complex with INSC and F2RL2/Par3. Interacts with TASOR. In terms of tissue distribution, detected in brain and liver (at protein level). Detected in brain, spleen, liver and testis, and at lower levels in heart, lung and kidney. Enriched in the ventricular zone of the developing central nervous systems. Expressed in proximal colon, ileum, ovary, Sertoli cells of the testis and granular cells within the cerebellum.

It localises to the cytoplasm. The protein localises to the cell cortex. It is found in the cytoskeleton. Its subcellular location is the spindle pole. The protein resides in the lateral cell membrane. Its function is as follows. Plays an important role in mitotic spindle pole organization via its interaction with NUMA1. Required for cortical dynein-dynactin complex recruitment during metaphase. Plays a role in metaphase spindle orientation. Plays an important role in asymmetric cell divisions. Has guanine nucleotide dissociation inhibitor (GDI) activity towards G(i) alpha proteins, such as GNAI1 and GNAI3, and thereby regulates their activity. This Mus musculus (Mouse) protein is G-protein-signaling modulator 2 (Gpsm2).